Here is a 241-residue protein sequence, read N- to C-terminus: 1-(5-phosphoribosyl)-5-[(5-phosphoribosylamino)methylideneamino] imidazole-4-carboxamide isomerase (241 aa).

D8 functions as the Proton acceptor in the catalytic mechanism. The Proton donor role is filled by D130.

The protein belongs to the HisA/HisF family.

It localises to the cytoplasm. It catalyses the reaction 1-(5-phospho-beta-D-ribosyl)-5-[(5-phospho-beta-D-ribosylamino)methylideneamino]imidazole-4-carboxamide = 5-[(5-phospho-1-deoxy-D-ribulos-1-ylimino)methylamino]-1-(5-phospho-beta-D-ribosyl)imidazole-4-carboxamide. It functions in the pathway amino-acid biosynthesis; L-histidine biosynthesis; L-histidine from 5-phospho-alpha-D-ribose 1-diphosphate: step 4/9. The protein is 1-(5-phosphoribosyl)-5-[(5-phosphoribosylamino)methylideneamino] imidazole-4-carboxamide isomerase of Leptospira borgpetersenii serovar Hardjo-bovis (strain JB197).